The following is a 59-amino-acid chain: Large ribosomal subunit protein bL33 (59 aa).

This sequence belongs to the bacterial ribosomal protein bL33 family.

The sequence is that of Large ribosomal subunit protein bL33 from Borrelia recurrentis (strain A1).